Reading from the N-terminus, the 193-residue chain is Pilin-like protein PilA2 (193 aa).

Positions methionine 1 to glycine 4 are cleaved as a propeptide — leader sequence. Leucine 5 is modified (N-methylleucine). The chain crosses the membrane as a helical span at residues leucine 5 to leucine 25.

It localises to the cell inner membrane. It is found in the cell outer membrane. Its subcellular location is the periplasm. Plays an essential role in natural DNA transformation but is not required for pilus biogenesis. This chain is Pilin-like protein PilA2 (pilA2), found in Thermus thermophilus (strain ATCC BAA-163 / DSM 7039 / HB27).